The primary structure comprises 198 residues: Rac-like GTP-binding protein ARAC3 (198 aa).

GTP contacts are provided by residues 13–21 (GDGAVGKTC), 31–38 (FPTDYVPT), 60–64 (DTAGQ), and 118–121 (TKLD). The Effector region motif lies at 35 to 43 (YVPTVFDNF). Residue C158 is the site of S-palmitoyl cysteine attachment. Cysteine methyl ester is present on C195. A lipid anchor (S-geranylgeranyl cysteine) is attached at C195. Positions 196–198 (SIL) are cleaved as a propeptide — removed in mature form.

Belongs to the small GTPase superfamily. Rho family. As to quaternary structure, interacts with Rho GDP-dissociation inhibitor 1 and ICR1. Binds to SPK1 when in the inactive GDP-bound form. In terms of tissue distribution, ubiquitous. Preferentially expressed at the tip of root hairs.

It is found in the cytoplasm. It localises to the cell membrane. Functionally, inactive GDP-bound Rho GTPases reside in the cytosol, are found in a complex with Rho GDP-dissociation inhibitors (Rho GDIs), and are released from the GDI protein in order to translocate to membranes upon activation. Involved in cell polarity control during the actin-dependent tip growth of root hairs, thus regulating root hair length and root hair initiation. Contributes, in a SPK1-dependent manner, to the prevention of cortical microtubules organization into parallel arrays oriented perpendicular to the axis of cell elongation to limit anisotropic cell growth during petal development. SPK1-dependent activation is required for auxin-mediated inhibition of PIN2 internalization during gravitropic responses. This chain is Rac-like GTP-binding protein ARAC3, found in Arabidopsis thaliana (Mouse-ear cress).